The sequence spans 31 residues: Photosystem I reaction center subunit XII (31 aa).

Residues 7–26 traverse the membrane as a helical segment; the sequence is QIYIALLTALIPAFFALKLG.

This sequence belongs to the PsaM family.

The protein localises to the plastid. The protein resides in the chloroplast thylakoid membrane. This chain is Photosystem I reaction center subunit XII, found in Euglena mutabilis.